The sequence spans 212 residues: Ion-translocating oxidoreductase complex subunit G (212 aa).

Residues 9-29 (ASLLGLFALLCTALVALVNQF) traverse the membrane as a helical segment. FMN phosphoryl threonine is present on threonine 176.

It belongs to the RnfG family. As to quaternary structure, the complex is composed of six subunits: RnfA, RnfB, RnfC, RnfD, RnfE and RnfG. Requires FMN as cofactor.

It is found in the cell inner membrane. Part of a membrane-bound complex that couples electron transfer with translocation of ions across the membrane. The polypeptide is Ion-translocating oxidoreductase complex subunit G (Shewanella loihica (strain ATCC BAA-1088 / PV-4)).